The chain runs to 609 residues: Polyadenylate-binding protein 7 (609 aa).

4 consecutive RRM domains span residues A24 to R102, G112 to K189, T201 to K278, and S304 to K381. In terms of domain architecture, PABC spans E509–T586.

It belongs to the polyadenylate-binding protein type-1 family. Expressed predominantly in siliques.

It localises to the cytoplasm. The protein resides in the nucleus. Its function is as follows. Binds the poly(A) tail of mRNA. Appears to be an important mediator of the multiple roles of the poly(A) tail in mRNA biogenesis, stability and translation. The sequence is that of Polyadenylate-binding protein 7 (PAB7) from Arabidopsis thaliana (Mouse-ear cress).